Consider the following 315-residue polypeptide: tRNA-cytidine(32) 2-sulfurtransferase (315 aa).

The short motif at 39–44 (SGGKDS) is the PP-loop motif element. Cys114, Cys117, and Cys205 together coordinate [4Fe-4S] cluster.

Belongs to the TtcA family. As to quaternary structure, homodimer. Mg(2+) serves as cofactor. [4Fe-4S] cluster is required as a cofactor.

It localises to the cytoplasm. The enzyme catalyses cytidine(32) in tRNA + S-sulfanyl-L-cysteinyl-[cysteine desulfurase] + AH2 + ATP = 2-thiocytidine(32) in tRNA + L-cysteinyl-[cysteine desulfurase] + A + AMP + diphosphate + H(+). Its pathway is tRNA modification. In terms of biological role, catalyzes the ATP-dependent 2-thiolation of cytidine in position 32 of tRNA, to form 2-thiocytidine (s(2)C32). The sulfur atoms are provided by the cysteine/cysteine desulfurase (IscS) system. The polypeptide is tRNA-cytidine(32) 2-sulfurtransferase (Ralstonia pickettii (strain 12J)).